The following is a 446-amino-acid chain: MEASFVQTTMALGLSSKKASSRNVAVERKNLITVCRFSVKTLLEKYTAEPIDDSSEEFVNFAAILEQILSHRFKACAPAGPVSWFSSDGQRGFWDYIRLACSKVPNNCVSSIENMENISTARAKGRAWIRVALMEKRMSEYITTALRDTRTTRRFYDSGAIMLRDEATILTGMLIGLSAIDFSFCLKGEVLDGKTPVVIDYTPYLKFTQSYDYLTDEEERHSAESSTSEDNSPEHPYLPLVTDEDSWYSKWHKMEQKFRIVYAQKGYLEELVRLRESQLKDLEAENRRLQLQLEEAAAQNQREKRELEGVILELQEQLTGLIPSDHAPLAQGSKELTTPLVNQWPSLGTLNGAEGASNSKLYRRHSFMSTEPLSAEASLSSDSQRLGEGTRDEEPWGPIGKDPTPSMLGLCGSLASIPSCKSLASFKSNECLVSDSPEGSPALSPS.

The interaction with RAP2A stretch occupies residues 1–298 (MEASFVQTTM…LQLQLEEAAA (298 aa)). Residues 52–189 (DDSSEEFVNF…IDFSFCLKGE (138 aa)) form the RUN domain. A Phosphothreonine modification is found at Thr-215. Residues 216–239 (DEEERHSAESSTSEDNSPEHPYLP) are disordered. The residue at position 232 (Ser-232) is a Phosphoserine. Residues 267 to 322 (YLEELVRLRESQLKDLEAENRRLQLQLEEAAAQNQREKRELEGVILELQEQLTGLI) are a coiled coil. Residues 372-384 (PLSAEASLSSDSQ) show a composition bias toward polar residues. Residues 372-404 (PLSAEASLSSDSQRLGEGTRDEEPWGPIGKDPT) are disordered. Residues Ser-416 and Ser-419 each carry the phosphoserine modification.

The protein belongs to the RUNDC3 family. Interacts with the GTP-bound form of RAP2A.

In terms of biological role, may act as an effector of RAP2A in neuronal cells. This is RUN domain-containing protein 3A (RUNDC3A) from Homo sapiens (Human).